The chain runs to 309 residues: Homoserine O-succinyltransferase (309 aa).

Residue Cys-142 is the Acyl-thioester intermediate of the active site. The substrate site is built by Lys-163 and Ser-192. The active-site Proton acceptor is His-235. Glu-237 is a catalytic residue. Arg-249 lines the substrate pocket.

The protein belongs to the MetA family. In terms of assembly, homodimer.

The protein localises to the cytoplasm. It catalyses the reaction L-homoserine + succinyl-CoA = O-succinyl-L-homoserine + CoA. Its pathway is amino-acid biosynthesis; L-methionine biosynthesis via de novo pathway; O-succinyl-L-homoserine from L-homoserine: step 1/1. Functionally, transfers a succinyl group from succinyl-CoA to L-homoserine, forming succinyl-L-homoserine. This is Homoserine O-succinyltransferase from Escherichia coli O17:K52:H18 (strain UMN026 / ExPEC).